A 225-amino-acid polypeptide reads, in one-letter code: LysM and putative peptidoglycan-binding domain-containing protein 1 (225 aa).

Phosphoserine occurs at positions 23 and 33. Residues 40–84 (LEHQLAPGDTLAGLALKYGVTMEQIKRANRLYTNDSIFLKKTLHI) form the LysM domain. The segment at 97 to 153 (LDSEEEKDGEEAVQPSKDEVRPHSAERKKRERGLGHANGEPLPTAGQEPARHDLSAS) is disordered. The span at 98 to 107 (DSEEEKDGEE) shows a compositional bias: acidic residues. Serine 99 carries the post-translational modification Phosphoserine. Residues 112–121 (SKDEVRPHSA) show a composition bias toward basic and acidic residues. Serine 164, serine 179, serine 192, and serine 210 each carry phosphoserine. The segment at 170–225 (AAQKLKKGESGIPGEDSSLHLSSPRMQQRAVLGPVPLTQTSRTRTLRDQEDEIFKL) is disordered. Residues 214-225 (TLRDQEDEIFKL) are compositionally biased toward basic and acidic residues.

The sequence is that of LysM and putative peptidoglycan-binding domain-containing protein 1 (LYSMD1) from Bos taurus (Bovine).